The sequence spans 271 residues: MNVALIDPTARVADGAWLADDVEVGPYCIVGPDVTLEDGVRLHAHVNVQGVTTLGARTQVYPFASLGTPPQSVHYKGEKTSLVVGTDCQIREHVTMNTGTASGRGVTRVGNNCMLMTAAHVAHDCLVGDNVIFANNATLGGHVEVGDNVFLGGLSAVHQFVRIGAQVMIGGVTGVREDVIPFGYAIGQNANLVGLNVVGMKRRGFSKSELHAARAAYRDLFFGEGTFAERLAGLRERQDASPFIKALVSFVDAGGKRALCHPSRGVVAQED.

The protein belongs to the transferase hexapeptide repeat family. LpxA subfamily. In terms of assembly, homotrimer.

The protein resides in the cytoplasm. It carries out the reaction a (3R)-hydroxyacyl-[ACP] + UDP-N-acetyl-alpha-D-glucosamine = a UDP-3-O-[(3R)-3-hydroxyacyl]-N-acetyl-alpha-D-glucosamine + holo-[ACP]. It functions in the pathway glycolipid biosynthesis; lipid IV(A) biosynthesis; lipid IV(A) from (3R)-3-hydroxytetradecanoyl-[acyl-carrier-protein] and UDP-N-acetyl-alpha-D-glucosamine: step 1/6. In terms of biological role, involved in the biosynthesis of lipid A, a phosphorylated glycolipid that anchors the lipopolysaccharide to the outer membrane of the cell. This chain is Acyl-[acyl-carrier-protein]--UDP-N-acetylglucosamine O-acyltransferase, found in Azorhizobium caulinodans (strain ATCC 43989 / DSM 5975 / JCM 20966 / LMG 6465 / NBRC 14845 / NCIMB 13405 / ORS 571).